The chain runs to 322 residues: Follistatin-A (322 aa).

A signal peptide spans 1–32 (MLRMLKRQQLHPGMILLLFWLCYLIEDQKVQA). Positions 33–106 (GNCWLQQGKN…TCDNVDCGPG (74 aa)) constitute a TB domain. 8 cysteine pairs are disulfide-bonded: cysteine 35–cysteine 58, cysteine 45–cysteine 91, cysteine 59–cysteine 94, cysteine 98–cysteine 109, cysteine 103–cysteine 119, cysteine 121–cysteine 153, cysteine 125–cysteine 146, and cysteine 135–cysteine 167. The N-linked (GlcNAc...) asparagine glycan is linked to asparagine 75. The region spanning 97–120 (TCDNVDCGPGKRCKMNRRSKPRCV) is the Follistatin-like 1 domain. Kazal-like domains are found at residues 103 to 169 (CGPG…KCKK), 189 to 244 (NAYC…KCIK), and 267 to 321 (RGRC…SCNC). An N-linked (GlcNAc...) asparagine glycan is attached at asparagine 127. The region spanning 170 to 193 (TCRDVLCPGSSTCVVDQTNNAYCV) is the Follistatin-like 2 domain. Cystine bridges form between cysteine 195–cysteine 228, cysteine 199–cysteine 221, and cysteine 210–cysteine 242. In terms of domain architecture, Follistatin-like 3 spans 247–271 (SCDDIHCSAGKKCLWDAKMSRGRCA). Cystine bridges form between cysteine 273-cysteine 305, cysteine 277-cysteine 298, and cysteine 287-cysteine 319. N-linked (GlcNAc...) asparagine glycosylation is present at asparagine 291.

In terms of assembly, monomer. Not expressed in the organizer region. Expression in gastrulating embryos is confined to anterior and paraxial regions, which give rise to head mesoderm and the first five somites. In addition, expressed transiently in a subset of cells in the posterior notochord anlage. Later, expression is seen in brain, eyes and somites.

Binds directly to activin and functions as an activin antagonist. Specific inhibitor of the biosynthesis and secretion of pituitary follicle stimulating hormone (fsh). Inhibits bmp-signaling during later stages of development including late phases of dorsoventral patterning, to refine the early pattern set up by the interaction of chordino and bmp2/4. Not involved in organizer function or early phases of dorsoventral pattern formation. This is Follistatin-A (fsta) from Danio rerio (Zebrafish).